Consider the following 617-residue polypeptide: AUGMIN subunit 3 (617 aa).

Coiled coils occupy residues 107-140, 314-334, and 481-504; these read DATLAHKAEALELQRQLRRLQTQYDLLTGQSSAL, LHSLRRKHADLVEEISTLYQK, and AIIQQIVALQSDLSSLQSDLENSL.

It belongs to the HAUS3 family. In terms of assembly, part of the augmin complex composed of 8 subunits. The complex acts on microtubules and interacts with gamma-tubulin in spindles and the phragmoplast. Interacts with AUG1.

It localises to the cytoplasm. The protein resides in the cytoskeleton. It is found in the spindle. The protein localises to the phragmoplast. Its function is as follows. Involved in microtubules reorganization during spindle and phragmoplast development. Required for gamma-tubulin localization during mitosis. The polypeptide is AUGMIN subunit 3 (Arabidopsis thaliana (Mouse-ear cress)).